The primary structure comprises 308 residues: D-alanine--D-alanine ligase (308 aa).

The region spanning 102 to 302 (KHVAKAAGIP…FGEFLRWMVE (201 aa)) is the ATP-grasp domain. 128–183 (PMKPPYVVKPVREGSSFGVVIVKEDQSHPPQVITSSEWRYGDRVMVERYIAGREFT) is an ATP binding site. The Mg(2+) site is built by Asp-252, Glu-269, and Asn-271.

Belongs to the D-alanine--D-alanine ligase family. It depends on Mg(2+) as a cofactor. Mn(2+) is required as a cofactor.

It is found in the cytoplasm. The catalysed reaction is 2 D-alanine + ATP = D-alanyl-D-alanine + ADP + phosphate + H(+). The protein operates within cell wall biogenesis; peptidoglycan biosynthesis. Functionally, cell wall formation. The chain is D-alanine--D-alanine ligase from Rhizobium meliloti (strain 1021) (Ensifer meliloti).